The following is a 309-amino-acid chain: L-arabinose 1-dehydrogenase (NAD(P)(+)) (309 aa).

Residues isoleucine 15 and serine 37–arginine 38 each bind NADP(+). The active-site Proton donor is lysine 91. Aspartate 169 contacts NADP(+).

It belongs to the Gfo/Idh/MocA family. Monomer.

The enzyme catalyses alpha-L-arabinopyanose + NAD(+) = L-arabinono-1,4-lactone + NADH + H(+). It catalyses the reaction alpha-L-arabinopyanose + NADP(+) = L-arabinono-1,4-lactone + NADPH + H(+). The catalysed reaction is D-galactose + NAD(+) = D-galactono-1,4-lactone + NADH + H(+). It carries out the reaction D-galactose + NADP(+) = D-galactono-1,5-lactone + NADPH + H(+). The protein operates within carbohydrate degradation; L-arabinose degradation via L-arabinono-1,4-lactone pathway. Its function is as follows. Catalyzes the NAD(P)(+)-dependent conversion of L-arabinose to L-arabino-gamma-lactone. Is involved in a degradation pathway of L-arabinose that allows A.brasilense to grow on L-arabinose as a sole carbon source. Prefers NADP(+) to NAD(+) as electron acceptor. Displays high catalytic efficiency for both L-arabinose and D-galactose in vitro. However, the enzyme appears to be involved in the metabolism of L-arabinose but not D-galactose in vivo. To a lesser extent, is also active on D-talose and D-xylose as substrates in vitro, but not with D-arabinose, D-glucose, D-ribose, L-xylose, L-mannose, L-lyxose, and D-fructose. The polypeptide is L-arabinose 1-dehydrogenase (NAD(P)(+)) (araA) (Azospirillum brasilense).